The following is a 343-amino-acid chain: MAEQLSPGKAVDQVCTFLFKKPGRKGAAGRRKRPACDPEPGESGSSSDEGCTVVRPEKKRVTHNPMIQKTRDSGKQKAAYGDLSSEEEEENEPESLGVVYKSTRSAKPVGPEDMGATAVYELDTEKERDAQAIFERSQKIQEELRGKEDDKIYRGINNYQKYMKPKDTSMGNASSGMVRKGPIRAPEHLRATVRWDYQPDICKDYKETGFCGFGDSCKFLHDRSDYKHGWQIERELDEGRYGVYEDENYEVGSDDEEIPFKCFICRQSFQNPVVTKCRHYFCESCALQHFRTTPRCYVCDQQTNGVFNPAKELIAKLEKHRATGEGGASDLPEDPDEDAIPIT.

Alanine 2 carries the N-acetylalanine modification. Residues 2–60 (AEQLSPGKAVDQVCTFLFKKPGRKGAAGRRKRPACDPEPGESGSSSDEGCTVVRPEKKR) are important for interaction with SNRNP200/BRR2. Phosphoserine is present on serine 6. Over residues 22–33 (PGRKGAAGRRKR) the composition is skewed to basic residues. The tract at residues 22-96 (PGRKGAAGRR…EEEENEPESL (75 aa)) is disordered. Over residues 41–50 (GESGSSSDEG) the composition is skewed to low complexity. The important for interaction with CXCR4 stretch occupies residues 50 to 61 (GCTVVRPEKKRV). Phosphoserine is present on residues serine 84 and serine 85. The span at 84 to 93 (SSEEEEENEP) shows a compositional bias: acidic residues. Residues 196-224 (DYQPDICKDYKETGFCGFGDSCKFLHDRS) form a C3H1-type zinc finger. Residue serine 253 is modified to Phosphoserine. The segment at 262 to 300 (CFICRQSFQNPVVTKCRHYFCESCALQHFRTTPRCYVCD) adopts an RING-type zinc-finger fold. Residues 322 to 343 (ATGEGGASDLPEDPDEDAIPIT) are disordered. The segment covering 331-343 (LPEDPDEDAIPIT) has biased composition (acidic residues).

In terms of assembly, component of pre-catalytic and catalytic spliceosome complexes. Interacts (via N-terminus) with the spliceosome subunit SNRNP200/BRR2. Component of the minor spliceosome, which splices U12-type introns. Within this complex, interacts with SCNM1 and CRIPT. Ubiquitous.

It is found in the nucleus. Its subcellular location is the nucleus speckle. The enzyme catalyses S-ubiquitinyl-[E2 ubiquitin-conjugating enzyme]-L-cysteine + [acceptor protein]-L-lysine = [E2 ubiquitin-conjugating enzyme]-L-cysteine + N(6)-ubiquitinyl-[acceptor protein]-L-lysine.. Its pathway is protein modification; protein ubiquitination. Functionally, required for pre-mRNA splicing as component of the spliceosome. As a component of the minor spliceosome, involved in the splicing of U12-type introns in pre-mRNAs. E3 ubiquitin-protein ligase that catalyzes the transfer of ubiquitin onto target proteins. Catalyzes polyubiquitination of SNRNP200/BRR2 with non-canonical 'Lys-63'-linked polyubiquitin chains. Plays a role in DNA repair via its role in the synthesis of 'Lys-63'-linked polyubiquitin chains that recruit ALKBH3 and the ASCC complex to sites of DNA damage by alkylating agents. Ubiquitinates CXCR4, leading to its degradation, and thereby contributes to the termination of CXCR4 signaling. The sequence is that of E3 ubiquitin-protein ligase RNF113A (RNF113A) from Homo sapiens (Human).